Here is a 158-residue protein sequence, read N- to C-terminus: Small ribosomal subunit protein uS9 (158 aa).

The interval M1–A20 is disordered. The span at V10 to A20 shows a compositional bias: low complexity.

This sequence belongs to the universal ribosomal protein uS9 family.

This Mycobacterium sp. (strain JLS) protein is Small ribosomal subunit protein uS9.